A 73-amino-acid chain; its full sequence is Small ribosomal subunit protein eS27 (73 aa).

Zn(2+)-binding residues include C28, C31, C47, and C50. The C4-type zinc finger occupies 28-50; it reads CPKCGNRQVVFSHSTFRARCLNC.

This sequence belongs to the eukaryotic ribosomal protein eS27 family. Part of the 30S ribosomal subunit. The cofactor is Zn(2+).

This Aeropyrum pernix (strain ATCC 700893 / DSM 11879 / JCM 9820 / NBRC 100138 / K1) protein is Small ribosomal subunit protein eS27.